Reading from the N-terminus, the 444-residue chain is sn-glycerol-3-phosphate-binding periplasmic protein UgpB (444 aa).

Residues 1–30 form the signal peptide; it reads MFNNTIRKTHAIRTAAACVAFALMSAGAQA. Residues Y72, E96, S151, S277, G314, Y353, and R404 each coordinate sn-glycerol 3-phosphate.

Belongs to the bacterial solute-binding protein 1 family. The complex is composed of two ATP-binding proteins (UgpC), two transmembrane proteins (UgpA and UgpE) and a solute-binding protein (UgpB).

It is found in the periplasm. In terms of biological role, part of the ABC transporter complex UgpBAEC involved in sn-glycerol-3-phosphate (G3P) import. Binds G3P. In Pectobacterium atrosepticum (strain SCRI 1043 / ATCC BAA-672) (Erwinia carotovora subsp. atroseptica), this protein is sn-glycerol-3-phosphate-binding periplasmic protein UgpB (ugpB).